A 316-amino-acid polypeptide reads, in one-letter code: MKVLWVALVVALLAGCQADMEGELGSEEPLPPEQPRGQDSQPWEQVLGRLWDYLRWVQTLSDQVQEELLNTQVIQELTVLMEETMKEVKAYREELEGQLAPMAQETQARVSKELQAAQARLGSDMEDLRNRLAQYRSEVQAMLGQSTEELRARMASHLRKLRKRLLRDADDLKKRLAVYQAGASEGAERSVSAIRERLRPLVEQSQSRAATLSTQVGQPLLDRAEAWRQKLHGRLEEVGVRAQDRLDKMRQQLEEVRAKVEEQGSQIRLQAEAFQARLRSWFEPLVEDMQRQWAGLVEKVQLALHLSPTSPPSENH.

The N-terminal stretch at 1–18 (MKVLWVALVVALLAGCQA) is a signal peptide. 8 repeat units span residues 79 to 100 (VLME…GQLA), 101 to 122 (PMAQ…ARLG), 123 to 144 (SDME…AMLG), 145 to 166 (QSTE…KRLL), 167 to 188 (RDAD…EGAE), 189 to 210 (RSVS…SRAA), 211 to 232 (TLST…QKLH), and 233 to 254 (GRLE…QQLE). Positions 79–254 (VLMEETMKEV…RLDKMRQQLE (176 aa)) are 8 X 22 AA approximate tandem repeats. Met-142 carries the methionine sulfoxide modification. The residue at position 146 (Ser-146) is a Phosphoserine. Residues 157–167 (HLRKLRKRLLR) are LDL and other lipoprotein receptors binding. 161 to 164 (LRKR) contributes to the heparin binding site. The tract at residues 209 to 289 (AATLSTQVGQ…SWFEPLVEDM (81 aa)) is lipid-binding and lipoprotein association. Thr-211 carries an O-linked (GalNAc...) threonine glycan. 228-235 (RQKLHGRL) lines the heparin pocket. The interval 265–316 (SQIRLQAEAFQARLRSWFEPLVEDMQRQWAGLVEKVQLALHLSPTSPPSENH) is homooligomerization. The tract at residues 277–289 (RLRSWFEPLVEDM) is specificity for association with VLDL.

This sequence belongs to the apolipoprotein A1/A4/E family. In terms of assembly, homotetramer. May interact with ABCA1; functionally associated with ABCA1 in the biogenesis of HDLs. May interact with APP/A4 amyloid-beta peptide; the interaction is extremely stable in vitro but its physiological significance is unclear. May interact with MAPT. May interact with MAP2. In the cerebrospinal fluid, interacts with secreted SORL1. Interacts with PMEL; this allows the loading of PMEL luminal fragment on ILVs to induce fibril nucleation. In terms of processing, APOE exists as multiple glycosylated and sialylated glycoforms within cells and in plasma. The extent of glycosylation and sialylation are tissue and context specific. Glycated in plasma VLDL. Post-translationally, phosphorylated by FAM20C in the extracellular medium.

It is found in the secreted. The protein localises to the extracellular space. Its subcellular location is the extracellular matrix. The protein resides in the extracellular vesicle. It localises to the endosome. It is found in the multivesicular body. Its function is as follows. APOE is an apolipoprotein, a protein associating with lipid particles, that mainly functions in lipoprotein-mediated lipid transport between organs via the plasma and interstitial fluids. APOE is a core component of plasma lipoproteins and is involved in their production, conversion and clearance. Apolipoproteins are amphipathic molecules that interact both with lipids of the lipoprotein particle core and the aqueous environment of the plasma. As such, APOE associates with chylomicrons, chylomicron remnants, very low density lipoproteins (VLDL) and intermediate density lipoproteins (IDL) but shows a preferential binding to high-density lipoproteins (HDL). It also binds a wide range of cellular receptors including the LDL receptor/LDLR and the very low-density lipoprotein receptor/VLDLR that mediate the cellular uptake of the APOE-containing lipoprotein particles. Finally, APOE also has a heparin-binding activity and binds heparan-sulfate proteoglycans on the surface of cells, a property that supports the capture and the receptor-mediated uptake of APOE-containing lipoproteins by cells. This Ovis aries musimon (Mouflon) protein is Apolipoprotein E (APOE).